The sequence spans 517 residues: Bifunctional purine biosynthesis protein PurH (517 aa).

In terms of domain architecture, MGS-like spans 1-145 (MSPLALVSVS…KNHKDVSVLV (145 aa)).

It belongs to the PurH family.

It catalyses the reaction (6R)-10-formyltetrahydrofolate + 5-amino-1-(5-phospho-beta-D-ribosyl)imidazole-4-carboxamide = 5-formamido-1-(5-phospho-D-ribosyl)imidazole-4-carboxamide + (6S)-5,6,7,8-tetrahydrofolate. The enzyme catalyses IMP + H2O = 5-formamido-1-(5-phospho-D-ribosyl)imidazole-4-carboxamide. It functions in the pathway purine metabolism; IMP biosynthesis via de novo pathway; 5-formamido-1-(5-phospho-D-ribosyl)imidazole-4-carboxamide from 5-amino-1-(5-phospho-D-ribosyl)imidazole-4-carboxamide (10-formyl THF route): step 1/1. It participates in purine metabolism; IMP biosynthesis via de novo pathway; IMP from 5-formamido-1-(5-phospho-D-ribosyl)imidazole-4-carboxamide: step 1/1. In Prochlorococcus marinus (strain AS9601), this protein is Bifunctional purine biosynthesis protein PurH.